Reading from the N-terminus, the 376-residue chain is MLDLIQTRRDLHQIPEIGLEEFKTQAYLLDVIEKLTTGKDFVQIRTWRTGILVYLQGSQPERTIGWRTDIDGLPIVEQTGLPFASQHQGRMHACVHDFHMTIALGCLERALEEQPKNNLLFLFQPAEENEAGGMLMYEDGAFGDWLPDQFYGLHVRPDLKVGQIATNTHTLFAGTCEVKIRFKGKGGHAAFPHEANDALVAASYFVTQVQSVVSRNVNPIEGAVVTFGVFQAGTTNNVITDTAFLHGTIRALTQDMSLLVQKRVKTVAEGVAAAFDMEVEVELKQGGYLPVENNPALARELMDFFDEKDGIELIDIEPAMTGEDFGYLLSKVDGVMFWLGIDSPYALHHPQMSPKEEVLAIGVAAVSSFLKKKAAE.

Asp69 is an active-site residue. Glu128 serves as the catalytic Proton acceptor.

Belongs to the peptidase M20A family. N-acetyldiaminopimelate deacetylase subfamily.

The enzyme catalyses N-acetyl-(2S,6S)-2,6-diaminopimelate + H2O = (2S,6S)-2,6-diaminopimelate + acetate. The protein operates within amino-acid biosynthesis; L-lysine biosynthesis via DAP pathway; LL-2,6-diaminopimelate from (S)-tetrahydrodipicolinate (acetylase route): step 3/3. Its function is as follows. Catalyzes the conversion of N-acetyl-diaminopimelate to diaminopimelate and acetate. This Streptococcus pneumoniae serotype 4 (strain ATCC BAA-334 / TIGR4) protein is N-acetyldiaminopimelate deacetylase.